We begin with the raw amino-acid sequence, 177 residues long: Tubulin beta chain (177 aa).

Positions 156 to 177 are disordered; that stretch reads YQDATAEEEGEFDEEEGDEEAA. Over residues 160 to 177 the composition is skewed to acidic residues; the sequence is TAEEEGEFDEEEGDEEAA.

The protein belongs to the tubulin family. In terms of assembly, dimer of alpha and beta chains. A typical microtubule is a hollow water-filled tube with an outer diameter of 25 nm and an inner diameter of 15 nM. Alpha-beta heterodimers associate head-to-tail to form protofilaments running lengthwise along the microtubule wall with the beta-tubulin subunit facing the microtubule plus end conferring a structural polarity. Microtubules usually have 13 protofilaments but different protofilament numbers can be found in some organisms and specialized cells. The cofactor is Mg(2+).

The protein localises to the cytoplasm. It is found in the cytoskeleton. Its function is as follows. Tubulin is the major constituent of microtubules, a cylinder consisting of laterally associated linear protofilaments composed of alpha- and beta-tubulin heterodimers. Microtubules grow by the addition of GTP-tubulin dimers to the microtubule end, where a stabilizing cap forms. Below the cap, tubulin dimers are in GDP-bound state, owing to GTPase activity of alpha-tubulin. The chain is Tubulin beta chain from Lytechinus pictus (Painted sea urchin).